The primary structure comprises 144 residues: Androgenic gland hormone (144 aa).

An N-terminal signal peptide occupies residues 1–21 (MKGLVILVSLMCLALYNRICA). 4 cysteine pairs are disulfide-bonded: Cys33–Cys123, Cys42–Cys59, Cys44–Cys141, and Cys124–Cys132. Residues 68 to 113 (SAPEDELAFEDYEDQDYFHPRALSIPSEIEHDNEKESDAFSILSRG) constitute a propeptide, c peptide. The N-linked (GlcNAc...) (complex) asparagine glycan is linked to Asn133.

Androgenic gland.

It is found in the secreted. Functionally, controls sex differentiation and the formation of male appendages, spermatogenesis, pigmentation, and male specific behavior. The polypeptide is Androgenic gland hormone (Armadillidium vulgare (Pillbug)).